The sequence spans 291 residues: T-cell leukemia homeobox protein 3 (291 aa).

A disordered region spans residues 1-51 (MEAPASAQTPHPHEPISFGIDQILNSPDQDSAPAPRGPDGASYLGGPPGGR). A DNA-binding region (homeobox) is located at residues 166 to 225 (RKKPRTSFSRVQICELEKRFHRQKYLASAERAALAKSLKMTDAQVKTWFQNRRTKWRRQT).

It is found in the nucleus. This chain is T-cell leukemia homeobox protein 3 (Tlx3), found in Mus musculus (Mouse).